The sequence spans 190 residues: Elongation factor P-like protein (190 aa).

It belongs to the elongation factor P family.

The polypeptide is Elongation factor P-like protein (Yersinia enterocolitica serotype O:8 / biotype 1B (strain NCTC 13174 / 8081)).